Reading from the N-terminus, the 515-residue chain is Low affinity ammonium transporter (515 aa).

At 1-78 the chain is on the extracellular side; sequence MSTSSSVTQK…IIGNSFGTTN (78 aa). Residues 79 to 99 traverse the membrane as a helical segment; sequence AGQLSWFASAYSLTVGTFILI. At 100–111 the chain is on the cytoplasmic side; the sequence is AGRLGDIFGHKK. Residues 112-132 traverse the membrane as a helical segment; sequence FFVLGFFWYALWSLLAGFSVY. The Extracellular portion of the chain corresponds to 133–140; sequence SNQIFFDC. The chain crosses the membrane as a helical span at residues 141-161; that stretch reads CRAFQGMGPAFLLPNAIAILG. At 162 to 171 the chain is on the cytoplasmic side; the sequence is RTYKPGRRKN. A helical membrane pass occupies residues 172-192; that stretch reads MVFSLFGASAPGGFFLGAVFS. Over 193-202 the chain is Extracellular; that stretch reads SMLGQLAWWP. The chain crosses the membrane as a helical span at residues 203 to 223; that stretch reads WAYWIMGIACFVLAVAGYFVI. The Cytoplasmic segment spans residues 224-241; it reads PHTPMPSRDASSFKLLER. Residues 242 to 262 form a helical membrane-spanning segment; it reads IDFAGSVTGVVGLILFNFAWN. Topologically, residues 263–270 are extracellular; the sequence is QGPVVGWQ. A helical membrane pass occupies residues 271–291; sequence TPYTYALLIVGTFFLVIFAYI. Residues 292–310 lie on the Cytoplasmic side of the membrane; that stretch reads ESRAAFPLLPFAALSSDTA. Residues 311–331 form a helical membrane-spanning segment; the sequence is FVLSCIAAGWASFGIWIFYTW. The Extracellular segment spans residues 332-346; sequence QFMEDSRGQTPLLSS. Residues 347 to 367 form a helical membrane-spanning segment; it reads AQFSPVAISGFCAAVTTGFLL. Over 368–374 the chain is Cytoplasmic; the sequence is SHTPPST. The helical transmembrane segment at 375–395 threads the bilayer; the sequence is VMLFAMTAFTVGTILIATAPV. Residues 396 to 403 lie on the Extracellular side of the membrane; sequence HQTYWAQT. The chain crosses the membrane as a helical span at residues 404–424; that stretch reads FVSIIVMPWGMDMSFPAATIM. The Cytoplasmic portion of the chain corresponds to 425-435; that stretch reads LSDSMPHEHQG. A helical membrane pass occupies residues 436–456; sequence LAASLVNTVVNYSISIGLGIA. The Extracellular segment spans residues 457–479; that stretch reads GTIESRVNDGGAKPLKGYRCSWY. A helical transmembrane segment spans residues 480-500; it reads MGIGLSGLGIFVAATYAWSTF. Residues 501-515 lie on the Cytoplasmic side of the membrane; the sequence is MKSKKRISEKQHFIE.

This sequence belongs to the major facilitator superfamily.

The protein localises to the cell membrane. Functionally, low affinity ammonium transporter of the plasma membrane. May be involved in drug resistance through pumping them out of the cell. The chain is Low affinity ammonium transporter from Saccharomyces cerevisiae (strain ATCC 204508 / S288c) (Baker's yeast).